The sequence spans 175 residues: Crossover junction endodeoxyribonuclease RuvC (175 aa).

Active-site residues include Asp8, Glu67, and Asp139. Mg(2+) contacts are provided by Asp8, Glu67, and Asp139.

This sequence belongs to the RuvC family. Homodimer which binds Holliday junction (HJ) DNA. The HJ becomes 2-fold symmetrical on binding to RuvC with unstacked arms; it has a different conformation from HJ DNA in complex with RuvA. In the full resolvosome a probable DNA-RuvA(4)-RuvB(12)-RuvC(2) complex forms which resolves the HJ. Mg(2+) is required as a cofactor.

The protein resides in the cytoplasm. The catalysed reaction is Endonucleolytic cleavage at a junction such as a reciprocal single-stranded crossover between two homologous DNA duplexes (Holliday junction).. Its function is as follows. The RuvA-RuvB-RuvC complex processes Holliday junction (HJ) DNA during genetic recombination and DNA repair. Endonuclease that resolves HJ intermediates. Cleaves cruciform DNA by making single-stranded nicks across the HJ at symmetrical positions within the homologous arms, yielding a 5'-phosphate and a 3'-hydroxyl group; requires a central core of homology in the junction. The consensus cleavage sequence is 5'-(A/T)TT(C/G)-3'. Cleavage occurs on the 3'-side of the TT dinucleotide at the point of strand exchange. HJ branch migration catalyzed by RuvA-RuvB allows RuvC to scan DNA until it finds its consensus sequence, where it cleaves and resolves the cruciform DNA. In Marinobacter nauticus (strain ATCC 700491 / DSM 11845 / VT8) (Marinobacter aquaeolei), this protein is Crossover junction endodeoxyribonuclease RuvC.